Reading from the N-terminus, the 1505-residue chain is MVANFNPSVGSFVWVEDPDEAWIDGEVVQVNGDEIKVLCTSGKHVVTKISNAYPKDVEAPASGVDDMTRLAYLHEPGVLQNLHSRYDINEIYTYTGSILIAVNPFRRLPHLYSSHMMAQYKGASLGELSPHPFAVADAAYRQMINDGVSQSILVSGESGAGKTESTKLLMRYLAYMGGRAAAEGRSVEQKVLESNPVLEAFGNAKTVRNNNSSRFGKFVEIQFDEKGRISGAAIRTYLLERSRVCQVSDPERNYHCFYMLCAAPQEDVKKFKLEEPKKYHYLNQSKCLELDSINDAEEYHATRRAMDVVGISTEEQDAIFSVVAAILHIGNIEFAKGEEIDSSIPKDDKSLFHLKTAAELLSCDEKALEDSLCKRIMVTRDETITKTLDPEAATLSRDALAKVMYSRLFDWLVDKINSSIGQDHDSKYLIGVLDIYGFESFKTNSFEQFCINLTNEKLQQHFNQHVFKMEQEEYKKEEINWSYIEFVDNQDILDLIEKKPGGIIALLDEACMFPRSTHETFAQKLYQTFKTHKRFTKPKLARSDFTICHYAGDVTYQTELFLDKNKDYVIAEHQALLNSSSCSFVASLFPPMSDDSKQSKFSSIGTRFKQQLVSLLEILNTTEPHYIRCIKPNNLLKPGIFENENILQQLRCGGVMEAIRISCAGYPTRKHFDEFLARFGILAPEVLVKNSDDPAACKKLLDKVGLEGYQIGKTKVFLRAGQMADLDTRRTEVLGRSASIIQRKVRSYLAKKSFIVLRNSAKQIQSVCRGYLARSVYEGMRREAAALKIQRDLRRFLARKAYTELYSAAVSVQAGMRGMVARKELCFRRQTKAAIIIQTWCRGYLARLHYRKLKKAAITTQCAWRSKVARGELRKLKMAARETGALQAAKNKLEKQVEELTWRLQLEKRIRTDLEEAKKQESAKAQSSLEELQLKCKETEALLIKEREAAKKIAETAPIIKEIPVVDQELMDKITNENEKLKSMVSSLEMKIGETEKKLQETTKISQDRLNQALEAESKLVKLKTAMQRLEEKILDMEAEKKIMHQQTISTPVRTNLGHPPTAPVKNLENGHQTNLEKEFNEAEFTTPVDGKAGKSAAERQIMNVDALIDCVKDNIGFSNGKPVAAFTIYKCLLHWKCFESEKTNVFDRLIQMIGSAIENEDDNSHLAYWLTSTSALLFLLQKSLKTNGSGATQSKKPPASTSLFGRMAMSFRSSPASGNLAAAAEAAALAVVRPVEAKYPALLFKQQLAAYVEKMFGMVRDNLKRELSTLLSLCIQAPRSSKGGMLRSGRSFGKDSPAVHWQSIIDGLNSLLVTLKENHVPLVLIQKIYSQTFSYINVQLFNSLLLRKECCTFSNGEFVKSGLAELELWCCQAKEYSGPSWEELKHIRQAVGFLVIHQKYRISYDEIANDLCPVLSVQQLYRICTLYWDDSYNTRSVSQEVISSMRTLMTEESNDADSDSFLLDDDSSIPFSIDDISSSMEEKDFVGIKPAEELLENPAFVFLH.

The region spanning 8–57 (SVGSFVWVEDPDEAWIDGEVVQVNGDEIKVLCTSGKHVVTKISNAYPKDV) is the Myosin N-terminal SH3-like domain. The Myosin motor domain maps to 62 to 731 (SGVDDMTRLA…QMADLDTRRT (670 aa)). ATP-binding positions include 156–163 (GESGAGKT) and 209–217 (NNNSSRFGK). Actin-binding regions lie at residues 495–529 (LIEK…YQTF), 531–554 (THKR…AGDV), 589–612 (FPPM…KQQL), and 612–634 (LVSL…KPNN). IQ domains lie at 734–763 (LGRS…SAKQ), 757–786 (LRNS…EAAA), 782–811 (REAA…AAVS), 805–834 (LYSA…TKAA), 830–859 (QTKA…AAIT), and 853–882 (LKKA…AARE). Residues 883–1048 (TGALQAAKNK…AEKKIMHQQT (166 aa)) are a coiled coil. The Dilute domain occupies 1148-1452 (DRLIQMIGSA…ISSMRTLMTE (305 aa)).

The protein belongs to the TRAFAC class myosin-kinesin ATPase superfamily. Myosin family. Plant myosin class XI subfamily. In terms of assembly, homodimer. Interacts with RABC2A and RABD1. In terms of tissue distribution, expressed in flowers, leaves, roots and stems.

It is found in the cytoplasm. Functionally, myosin heavy chain that is required for the cell cycle-regulated transport of various organelles and proteins for their segregation. Functions by binding with its tail domain to receptor proteins on organelles and exerting force with its N-terminal motor domain against actin filaments, thereby transporting its cargo along polarized actin cables. Involved in the tip growth of root hair cells. Plays a major role in trafficking of Golgi stacks, mitochondria and peroxisomes during root hair development. Targets the peroxisome through an interaction with RABC2A. Required for development of pavement cells, trichomes, and stigmatic papillae. This chain is Myosin-6 (XI-2), found in Arabidopsis thaliana (Mouse-ear cress).